The chain runs to 398 residues: Putative L-rhamnonate dehydratase (398 aa).

Positions 29 and 55 each coordinate substrate. Mg(2+) contacts are provided by Asp221, Glu247, and Glu274. His324 functions as the Proton acceptor in the catalytic mechanism. Glu344 lines the substrate pocket.

The protein belongs to the mandelate racemase/muconate lactonizing enzyme family. RhamD subfamily. Mg(2+) serves as cofactor.

It catalyses the reaction L-rhamnonate = 2-dehydro-3-deoxy-L-rhamnonate + H2O. Its function is as follows. Catalyzes the dehydration of L-rhamnonate to 2-keto-3-deoxy-L-rhamnonate (KDR). This Caldivirga maquilingensis (strain ATCC 700844 / DSM 13496 / JCM 10307 / IC-167) protein is Putative L-rhamnonate dehydratase.